The chain runs to 319 residues: Structure-specific endonuclease subunit SLX1 (319 aa).

Positions 20–103 (TFYCCYLLQS…QHGYKTHYIP (84 aa)) constitute a GIY-YIG domain. Residues 233 to 297 (CNLCGQCYDY…LPNFCMCPGC (65 aa)) form an SLX1-type zinc finger.

Belongs to the SLX1 family. In terms of assembly, forms a heterodimer with SLX4. Requires a divalent metal cation as cofactor.

The protein resides in the nucleus. In terms of biological role, catalytic subunit of the SLX1-SLX4 structure-specific endonuclease that resolves DNA secondary structures generated during DNA repair and recombination. Has endonuclease activity towards branched DNA substrates, introducing single-strand cuts in duplex DNA close to junctions with ss-DNA. This is Structure-specific endonuclease subunit SLX1 from Vanderwaltozyma polyspora (strain ATCC 22028 / DSM 70294 / BCRC 21397 / CBS 2163 / NBRC 10782 / NRRL Y-8283 / UCD 57-17) (Kluyveromyces polysporus).